Consider the following 563-residue polypeptide: Delta-1-pyrroline-5-carboxylate dehydrogenase, mitochondrial (563 aa).

The N-terminal 24 residues, 1 to 24 (MLLPAPALRRALLSRPWTGAGLRW), are a transit peptide targeting the mitochondrion. An N6-succinyllysine modification is found at K31. S44 is subject to Phosphoserine. K52 carries the N6-acetyllysine modification. N6-acetyllysine; alternate is present on residues K93, K99, K114, K130, and K175. Residues K93, K99, K114, K130, and K175 each carry the N6-succinyllysine; alternate modification. Residues S208, K233, and 286–290 (GSVPT) contribute to the NAD(+) site. E314 (proton acceptor) is an active-site residue. K318 is modified (N6-acetyllysine). Position 347 is an N6-succinyllysine (K347). C348 (nucleophile) is an active-site residue. 2 positions are modified to N6-acetyllysine: K365 and K376. The residue at position 395 (K395) is an N6-succinyllysine. E447 contributes to the NAD(+) binding site. Residue K462 is modified to N6-acetyllysine. At K509 the chain carries N6-acetyllysine; alternate. At K509 the chain carries N6-succinyllysine; alternate. Position 513 (S513) interacts with substrate. N6-acetyllysine occurs at positions 531 and 552.

The protein belongs to the aldehyde dehydrogenase family. Homodimer. As to expression, highest expression is found in liver followed by skeletal muscle, kidney, heart, brain, placenta, lung and pancreas.

The protein localises to the mitochondrion matrix. The catalysed reaction is L-glutamate 5-semialdehyde + NAD(+) + H2O = L-glutamate + NADH + 2 H(+). Its pathway is amino-acid degradation; L-proline degradation into L-glutamate; L-glutamate from L-proline: step 2/2. Its function is as follows. Irreversible conversion of delta-1-pyrroline-5-carboxylate (P5C), derived either from proline or ornithine, to glutamate. This is a necessary step in the pathway interconnecting the urea and tricarboxylic acid cycles. The preferred substrate is glutamic gamma-semialdehyde, other substrates include succinic, glutaric and adipic semialdehydes. The polypeptide is Delta-1-pyrroline-5-carboxylate dehydrogenase, mitochondrial (ALDH4A1) (Homo sapiens (Human)).